The sequence spans 308 residues: HPr kinase/phosphorylase (308 aa).

Active-site residues include His-141 and Lys-162. ATP is bound at residue 156–163 (GKSGVGKS). Ser-163 is a binding site for Mg(2+). Asp-180 acts as the Proton acceptor; for phosphorylation activity. Proton donor; for dephosphorylation activity in catalysis. The interval 204 to 213 (MEIRGVGILD) is important for the catalytic mechanism of both phosphorylation and dephosphorylation. A Mg(2+)-binding site is contributed by Glu-205. The active site involves Arg-246. The important for the catalytic mechanism of dephosphorylation stretch occupies residues 267 to 272 (PVKPGR).

It belongs to the HPrK/P family. In terms of assembly, homohexamer. Mg(2+) serves as cofactor.

It carries out the reaction [HPr protein]-L-serine + ATP = [HPr protein]-O-phospho-L-serine + ADP + H(+). The catalysed reaction is [HPr protein]-O-phospho-L-serine + phosphate + H(+) = [HPr protein]-L-serine + diphosphate. Its function is as follows. Catalyzes the ATP- as well as the pyrophosphate-dependent phosphorylation of a specific serine residue in HPr, a phosphocarrier protein of the phosphoenolpyruvate-dependent sugar phosphotransferase system (PTS). HprK/P also catalyzes the pyrophosphate-producing, inorganic phosphate-dependent dephosphorylation (phosphorolysis) of seryl-phosphorylated HPr (P-Ser-HPr). The two antagonistic activities of HprK/P are regulated by several intracellular metabolites, which change their concentration in response to the absence or presence of rapidly metabolisable carbon sources (glucose, fructose, etc.) in the growth medium. Therefore, by controlling the phosphorylation state of HPr, HPrK/P is a sensor enzyme that plays a major role in the regulation of carbon metabolism and sugar transport: it mediates carbon catabolite repression (CCR), and regulates PTS-catalyzed carbohydrate uptake and inducer exclusion. This Peptoclostridium acidaminophilum (Eubacterium acidaminophilum) protein is HPr kinase/phosphorylase.